A 722-amino-acid polypeptide reads, in one-letter code: Lysophospholipid acyltransferase 6 (722 aa).

The next 5 membrane-spanning stretches (helical) occupy residues 25 to 45 (MVGL…ALFL), 62 to 84 (LRHT…QQAI), 104 to 123 (IVQR…VHLM), 180 to 200 (ALEY…PLVF), and 243 to 263 (KVVG…IYPV). Active-site residues include asparagine 349 and histidine 381. The next 3 membrane-spanning stretches (helical) occupy residues 378 to 398 (AVWH…AVVV), 424 to 444 (ILTC…FVLL), and 452 to 472 (LYLR…FILP). Polar residues-rich tracts occupy residues 485–511 (NGNG…STAA) and 549–570 (VEQP…QQQP). Disordered regions lie at residues 485-582 (NGNG…PTCA) and 650-687 (NGAI…DLHP).

The protein belongs to the membrane-bound acyltransferase family.

Its subcellular location is the endoplasmic reticulum. It is found in the membrane. It carries out the reaction a 1-acyl-sn-glycero-3-phospho-L-serine + an acyl-CoA = a 1,2-diacyl-sn-glycero-3-phospho-L-serine + CoA. The enzyme catalyses 1-(9Z-octadecenoyl)-sn-glycero-3-phospho-L-serine + (9Z)-hexadecenoyl-CoA = 1-(9Z-octadecenoyl)-2-(9Z-hexadecenoyl)-sn-glycero-3-phospho-L-serine + CoA. The catalysed reaction is 1-(9Z-octadecenoyl)-sn-glycero-3-phospho-L-serine + (9Z)-octadecenoyl-CoA = 1,2-di-(9Z)-octadecenoyl-sn-glycero-3-phospho-L-serine + CoA. It catalyses the reaction a 1-acyl-sn-glycero-3-phosphocholine + an acyl-CoA = a 1,2-diacyl-sn-glycero-3-phosphocholine + CoA. It carries out the reaction 1-hexadecanoyl-sn-glycero-3-phosphocholine + (9Z)-octadecenoyl-CoA = 1-hexadecanoyl-2-(9Z-octadecenoyl)-sn-glycero-3-phosphocholine + CoA. The enzyme catalyses (9Z)-hexadecenoyl-CoA + 1-hexadecanoyl-sn-glycero-3-phosphocholine = 1-hexadecanoyl-2-(9Z-hexadecenoyl)-sn-glycero-3-phosphocholine + CoA. The catalysed reaction is a 1-acyl-sn-glycero-3-phosphoethanolamine + an acyl-CoA = a 1,2-diacyl-sn-glycero-3-phosphoethanolamine + CoA. It catalyses the reaction 1-hexadecanoyl-sn-glycero-3-phosphoethanolamine + (9Z)-octadecenoyl-CoA = 1-hexadecanoyl-2-(9Z-octadecenoyl)-sn-glycero-3-phosphoethanolamine + CoA. It carries out the reaction 1-hexadecanoyl-sn-glycero-3-phosphoethanolamine + (9Z,12Z)-octadecadienoyl-CoA = 1-hexadecanoyl-2-(9Z,12Z-octadecadienoyl)-sn-glycero-3-phosphoethanolamine + CoA. The enzyme catalyses 1-hexadecanoyl-sn-glycero-3-phosphoethanolamine + (9Z)-hexadecenoyl-CoA = 1-hexadecanoyl-2-(9Z)-hexadecenoyl-sn-glycero-3-phosphoethanolamine + CoA. The catalysed reaction is 1-(9Z-octadecenoyl)-sn-glycero-3-phospho-(1'-sn-glycerol) + (9Z)-octadecenoyl-CoA = 1,2-di-(9Z-octadecenoyl)-sn-glycero-3-phospho-(1'-sn-glycerol) + CoA. It functions in the pathway lipid metabolism; phospholipid metabolism. Its function is as follows. Acyltransferase with broad-specificity, that mediates the acylation of lysophospholipids to produce phospholipids (glycerophospholipids). Converts lysophosphatidylserine (1-acyl-2-hydroxy-sn-glycero-3-phospho-L-serine or LPS) to phosphatidylserine (1,2-diacyl-sn-glycero-3-phospho-L-serine or PS) (LPSAT activity), lysophosphatidylcholine (1-acyl-sn-glycero-3-phosphocholine or LPC) to phosphatidylcholine (1,2-diacyl-sn-glycero-3-phosphocholine or PC) (LPCAT activity), also lysophosphatidylethanolamine (1-acyl-sn-glycero-3-phosphochethanolamine or LPE) to phosphatidylchethanolamine (LPEAT activity) and lysophosphatidylglycerol (1-acyl-2-hydroxy-sn-glycero-3-phospho-(1'-sn-glycerol) or LPG) to phosphatidylglycerol (1,2-diacyl-sn-glycero-3-phospho-(1'-sn-glycerol) or PG) (LPGAT activity). Has a preference for unsaturated fatty acids of at least 16 carbons such as oleoyl-CoA ((9Z)-octadecenoyl-CoA) and palmitoleoyl-CoA ((9Z)-hexadecenoyl-CoA). Glycerophospholipids are important structural and functional components of cellular membrane, acyl-chain remodeling regulates the molecular species distribution of glycerophospholipids which can affect membrane fluidity and curvature. Essential for fertility and viability together with Nessy protein (Nes). The protein is Lysophospholipid acyltransferase 6 of Drosophila melanogaster (Fruit fly).